A 342-amino-acid polypeptide reads, in one-letter code: MKFWRERERENKEQILAPLCGQVRVLVVGDSGVGKTSLVHLINKGSSIVRPPQTIGCTVGVKHITYGSPASSSSSIQGDSERDFFVELWDVSGHERYKDCRSLFYSQINGVIFVHDLSQRRTKTSLQKWASEVAATGTFSAPLPSGGPGGLPVPYIVVGNKADIAAKEGTKGSSGNLVDAARHWVEKQGLLPSSSEDLPLFESFPGNGGLIAAAKETRYDKEALNKFFRMLIRRRYFSDELPAASPWSISPVPTSSSQRLDEITSDDDQFYKRTSFHGDPYKYNNTIPPLPAQRNLTPPPTLYPQQPVSTPDNYTIPRYSLSSVQETTNNGSARSKRMDINV.

A small GTPase-like region spans residues 12-285 (KEQILAPLCG…FHGDPYKYNN (274 aa)). Residues 29–36 (GDSGVGKT), 90–94 (DVSGH), and 160–163 (NKAD) contribute to the GTP site. Disordered stretches follow at residues 274 to 313 (TSFH…TPDN) and 323 to 342 (SVQE…DINV). The segment covering 323–333 (SVQETTNNGSA) has biased composition (polar residues).

It belongs to the small GTPase superfamily.

It is found in the nucleus. The protein localises to the cytoplasm. Functionally, functional small GTPase that acts as a negative factor controlling the light-dependent period shortening of circadian rhythms and light-induced phase resetting during the subjective night. May protect the clock from excessive or mistimed light. Suppresses red and blue light-mediated photomorphogenesis and is required for light-controlled inhibition of endoreplication and tolerance to salt stress. The entrainment of the circadian clock is independent from the other pleiotropic effects. Could be a regulator of seedling establishment. This is Small GTPase LIP1 from Arabidopsis thaliana (Mouse-ear cress).